Reading from the N-terminus, the 336-residue chain is ATP-dependent 6-phosphofructokinase (336 aa).

An ATP-binding site is contributed by G11. 21–25 (RAVVR) is a binding site for ADP. Residues 72–73 (RY) and 102–105 (GDGS) contribute to the ATP site. D103 is a binding site for Mg(2+). Substrate is bound at residue 125-127 (TID). The active-site Proton acceptor is D127. R154 contacts ADP. Residues R162 and 169-171 (MGR) contribute to the substrate site. ADP contacts are provided by residues 185 to 187 (GAD), K211, and 213 to 215 (KKH). Substrate is bound by residues E222, R244, and 250–253 (HIQR).

The protein belongs to the phosphofructokinase type A (PFKA) family. ATP-dependent PFK group I subfamily. Prokaryotic clade 'B1' sub-subfamily. In terms of assembly, homotetramer. Mg(2+) serves as cofactor.

The protein resides in the cytoplasm. It catalyses the reaction beta-D-fructose 6-phosphate + ATP = beta-D-fructose 1,6-bisphosphate + ADP + H(+). The protein operates within carbohydrate degradation; glycolysis; D-glyceraldehyde 3-phosphate and glycerone phosphate from D-glucose: step 3/4. Its activity is regulated as follows. Allosterically activated by ADP and other diphosphonucleosides, and allosterically inhibited by phosphoenolpyruvate. Functionally, catalyzes the phosphorylation of D-fructose 6-phosphate to fructose 1,6-bisphosphate by ATP, the first committing step of glycolysis. The polypeptide is ATP-dependent 6-phosphofructokinase (Streptococcus suis (strain 05ZYH33)).